A 204-amino-acid polypeptide reads, in one-letter code: MNAPRPHDLLWGMPVSALPADAPQWALDVLAGAQPVVVRRAICDHGWVAVGLRGQGRTQRFAALMRLVDIQRQQGPEALRGPGQSPWPALQALASVAPVLNASGLAWGPTGGAGYQIATGIEVLHTGSDLDLLLHTPQPLARAQARELLDILDCAPCRIDVQLETPAGAVALREWAGFARRVLLKSDHGPRLVGDPWAAQERAA.

Residues Asp-129 and Asp-131 contribute to the active site.

This sequence belongs to the MdcG family.

The catalysed reaction is apo-[malonate decarboxylase ACP] + 2'-(5''-triphospho-alpha-D-ribosyl)-3'-dephospho-CoA = holo-[malonate decarboxylase ACP] + diphosphate. Functionally, transfers 2'-(5-triphosphoribosyl)-3'-dephosphocoenzyme-A to the apo-[acyl-carrier-protein] of the malonate decarboxylase to yield holo-[acyl-carrier-protein]. In Pseudomonas putida (strain GB-1), this protein is Phosphoribosyl-dephospho-CoA transferase.